The following is a 378-amino-acid chain: Ribosomal RNA large subunit methyltransferase G (378 aa).

The protein belongs to the methyltransferase superfamily. RlmG family.

It localises to the cytoplasm. The enzyme catalyses guanosine(1835) in 23S rRNA + S-adenosyl-L-methionine = N(2)-methylguanosine(1835) in 23S rRNA + S-adenosyl-L-homocysteine + H(+). In terms of biological role, specifically methylates the guanine in position 1835 (m2G1835) of 23S rRNA. This Citrobacter koseri (strain ATCC BAA-895 / CDC 4225-83 / SGSC4696) protein is Ribosomal RNA large subunit methyltransferase G.